Here is a 375-residue protein sequence, read N- to C-terminus: Chaperone protein DnaJ (375 aa).

One can recognise a J domain in the interval 5–70 (GYYEVLGVSK…QKRQAYDQFG (66 aa)). A CR-type zinc finger spans residues 142 to 220 (GKEYKIEIPR…CKGEGLTEKR (79 aa)). Positions 155, 158, 172, 175, 194, 197, 208, and 211 each coordinate Zn(2+). 4 CXXCXGXG motif repeats span residues 155 to 162 (CVDCTGSG), 172 to 179 (CPDCSGTG), 194 to 201 (CPRCKGKG), and 208 to 215 (CKTCKGEG).

This sequence belongs to the DnaJ family. Homodimer. It depends on Zn(2+) as a cofactor.

It localises to the cytoplasm. Functionally, participates actively in the response to hyperosmotic and heat shock by preventing the aggregation of stress-denatured proteins and by disaggregating proteins, also in an autonomous, DnaK-independent fashion. Unfolded proteins bind initially to DnaJ; upon interaction with the DnaJ-bound protein, DnaK hydrolyzes its bound ATP, resulting in the formation of a stable complex. GrpE releases ADP from DnaK; ATP binding to DnaK triggers the release of the substrate protein, thus completing the reaction cycle. Several rounds of ATP-dependent interactions between DnaJ, DnaK and GrpE are required for fully efficient folding. Also involved, together with DnaK and GrpE, in the DNA replication of plasmids through activation of initiation proteins. The polypeptide is Chaperone protein DnaJ (Leptospira biflexa serovar Patoc (strain Patoc 1 / Ames)).